The primary structure comprises 343 residues: N-acetyl-gamma-glutamyl-phosphate reductase (343 aa).

Residue cysteine 150 is part of the active site.

Belongs to the NAGSA dehydrogenase family. Type 1 subfamily.

Its subcellular location is the cytoplasm. The catalysed reaction is N-acetyl-L-glutamate 5-semialdehyde + phosphate + NADP(+) = N-acetyl-L-glutamyl 5-phosphate + NADPH + H(+). It participates in amino-acid biosynthesis; L-arginine biosynthesis; N(2)-acetyl-L-ornithine from L-glutamate: step 3/4. Catalyzes the NADPH-dependent reduction of N-acetyl-5-glutamyl phosphate to yield N-acetyl-L-glutamate 5-semialdehyde. The polypeptide is N-acetyl-gamma-glutamyl-phosphate reductase (Nitrosococcus oceani (strain ATCC 19707 / BCRC 17464 / JCM 30415 / NCIMB 11848 / C-107)).